A 465-amino-acid chain; its full sequence is Soluble pyridine nucleotide transhydrogenase (465 aa).

Residue 36-45 participates in FAD binding; sequence ERYNNVGGGC.

It belongs to the class-I pyridine nucleotide-disulfide oxidoreductase family. Requires FAD as cofactor.

The protein localises to the cytoplasm. It catalyses the reaction NAD(+) + NADPH = NADH + NADP(+). Conversion of NADPH, generated by peripheral catabolic pathways, to NADH, which can enter the respiratory chain for energy generation. The protein is Soluble pyridine nucleotide transhydrogenase of Serratia proteamaculans (strain 568).